Reading from the N-terminus, the 553-residue chain is Phenylalanine--tRNA ligase beta subunit (553 aa).

One can recognise a B5 domain in the interval 273–349 (FNVRNIDIEV…RAFGYNNITP (77 aa)). Mg(2+)-binding residues include Asp327, Asp333, Asp336, and Asp337.

Belongs to the phenylalanyl-tRNA synthetase beta subunit family. Type 2 subfamily. Tetramer of two alpha and two beta subunits. The cofactor is Mg(2+).

Its subcellular location is the cytoplasm. It catalyses the reaction tRNA(Phe) + L-phenylalanine + ATP = L-phenylalanyl-tRNA(Phe) + AMP + diphosphate + H(+). This is Phenylalanine--tRNA ligase beta subunit from Methanocella arvoryzae (strain DSM 22066 / NBRC 105507 / MRE50).